The sequence spans 28 residues: Morintide mO6 (28 aa).

A Chitin-binding type-1 domain is found at 1–28 (NGLCCSQYGFCGTTSAYCSRANGCQSNC). 2 cysteine pairs are disulfide-bonded: Cys-4-Cys-18 and Cys-24-Cys-28.

Seeds (at protein level).

Functionally, chitin-binding protein which functions in defense against chitin-containing fungal pathogens. The polypeptide is Morintide mO6 (Moringa oleifera (Horseradish tree)).